We begin with the raw amino-acid sequence, 322 residues long: Ferredoxin--NADP reductase (322 aa).

The FAD site is built by D34, Q42, Y47, V87, F120, D279, and T320.

It belongs to the ferredoxin--NADP reductase type 2 family. As to quaternary structure, homodimer. Requires FAD as cofactor.

It catalyses the reaction 2 reduced [2Fe-2S]-[ferredoxin] + NADP(+) + H(+) = 2 oxidized [2Fe-2S]-[ferredoxin] + NADPH. In Streptococcus pneumoniae (strain Hungary19A-6), this protein is Ferredoxin--NADP reductase.